We begin with the raw amino-acid sequence, 209 residues long: MNKVNINFSLKSLPTDLLNHMNYYDNGSTNVKCTLQSFKNTLEHNLLLINKLIEESENITNVLCHPNNILLEFNSNNVMNKLINDGTVKIINDNYDGTDDDLIPLVDLSEEETNQDRLNRIINMTNRDNSGGLFGASDDDEEEISDDDLLLHDLLGNQNDTSSIFNKYTNLIGNVIDNSDNSSDSDDSDSLDGSDDLNDSDNVDNLFVG.

The interval 177–209 (DNSDNSSDSDDSDSLDGSDDLNDSDNVDNLFVG) is disordered. Residues 183 to 202 (SDSDDSDSLDGSDDLNDSDN) show a composition bias toward acidic residues.

This is an uncharacterized protein from Acanthamoeba polyphaga (Amoeba).